The chain runs to 554 residues: ATP-dependent RNA helicase MRH4, mitochondrial (554 aa).

A mitochondrion-targeting transit peptide spans 1 to 54 (MSSVGIASASLWLRGPVKSALKGRWLSCEQMRRYGTKSAPAVRKGGHSKKARQA). The short motif at 119–140 (DCGLDDKRVAAFLGQVQPTPIQ) is the Q motif element. The Helicase ATP-binding domain occupies 150–337 (TLMEPQLQVH…NKLFPNLQVV (188 aa)). Residue 163–170 (AETGSGKT) participates in ATP binding. The DEAD box motif lies at 285 to 288 (DEAD). Residues 368 to 554 (ALAQALYAIM…PVVKKNRPIQ (187 aa)) enclose the Helicase C-terminal domain. Residues 439-474 (RIQDQVRPSELKKPQERRLPNSNIKVADSKDNGQRS) are disordered. Residues 445-457 (RPSELKKPQERRL) are compositionally biased toward basic and acidic residues.

It belongs to the DEAD box helicase family. MRH4 subfamily.

It localises to the mitochondrion. It carries out the reaction ATP + H2O = ADP + phosphate + H(+). Functionally, ATP-binding RNA helicase involved in mitochondrial RNA metabolism. Required for maintenance of mitochondrial DNA. In Eremothecium gossypii (strain ATCC 10895 / CBS 109.51 / FGSC 9923 / NRRL Y-1056) (Yeast), this protein is ATP-dependent RNA helicase MRH4, mitochondrial (MRH4).